We begin with the raw amino-acid sequence, 101 residues long: Therostasin (101 aa).

The N-terminal stretch at 1–19 (MRGLAVLLLVACFCSVAFG) is a signal peptide. Antistasin-like domains are found at residues 21–46 (CENT…TCLC) and 49–75 (CNDA…FCTC).

Salivary glands.

The protein resides in the secreted. Functionally, potent inhibitor of factor Xa. It also inhibits trypsin in a weaker manner. The protein is Therostasin of Theromyzon tessulatum (Duck leech).